Here is a 64-residue protein sequence, read N- to C-terminus: Large ribosomal subunit protein bL35 (64 aa).

The protein belongs to the bacterial ribosomal protein bL35 family.

The protein is Large ribosomal subunit protein bL35 of Shewanella baltica (strain OS223).